Here is a 477-residue protein sequence, read N- to C-terminus: MNFETVIGLEVHVELSTNSKIFSPASTKFGGDPNSNTNVIDWSLPGVLPVMNKGVIDSGIKAALALNMDIHKSMHFDRKNYFYPDNPKAYQISQFDEPIGYNGSIEIELEDGHKATIRIERAHLEEDAGKNTHGTDGYSYVDLNRQGVPLIEIVSEADMRTPEEAYAYLTALKEAILYTGISDVKMEEGSMRCDANVSLRPYGQEAFGVKTEVKNMNSFSNVKKALDFEVARQAKILRAGGEIRQETRRFNDKTGETILMRVKEGASDYRYFPEPDVPRFEISDEWIEQMRASLPMTATARRAHYINDLGLSDYDARQLTATKEVSDFFDQAIKFDTDPKLVSNWLQGEVAQYLNSEKKELHEIGLTPENLTEMIRLISDGTISSKIAKKVFIELAKNGGSAEEFVKKAGLVQISDPDLLLPIIHEVFAKNEQSVADYRGGKQNAAKALVGQLMKATKGQANPTVAQKLLYQELDNF.

Belongs to the GatB/GatE family. GatB subfamily. As to quaternary structure, heterotrimer of A, B and C subunits.

It carries out the reaction L-glutamyl-tRNA(Gln) + L-glutamine + ATP + H2O = L-glutaminyl-tRNA(Gln) + L-glutamate + ADP + phosphate + H(+). It catalyses the reaction L-aspartyl-tRNA(Asn) + L-glutamine + ATP + H2O = L-asparaginyl-tRNA(Asn) + L-glutamate + ADP + phosphate + 2 H(+). In terms of biological role, allows the formation of correctly charged Asn-tRNA(Asn) or Gln-tRNA(Gln) through the transamidation of misacylated Asp-tRNA(Asn) or Glu-tRNA(Gln) in organisms which lack either or both of asparaginyl-tRNA or glutaminyl-tRNA synthetases. The reaction takes place in the presence of glutamine and ATP through an activated phospho-Asp-tRNA(Asn) or phospho-Glu-tRNA(Gln). In Lactococcus lactis subsp. cremoris (strain MG1363), this protein is Aspartyl/glutamyl-tRNA(Asn/Gln) amidotransferase subunit B.